A 204-amino-acid chain; its full sequence is Phosphopantothenoylcysteine decarboxylase (204 aa).

Residues threonine 53 and 104 to 107 contribute to the FMN site; that span reads DANT. Residue asparagine 140 coordinates substrate. Cysteine 173 (proton donor) is an active-site residue.

Belongs to the HFCD (homooligomeric flavin containing Cys decarboxylase) superfamily. In terms of assembly, homotrimer. It depends on FMN as a cofactor.

It catalyses the reaction N-[(R)-4-phosphopantothenoyl]-L-cysteine + H(+) = (R)-4'-phosphopantetheine + CO2. It participates in cofactor biosynthesis; coenzyme A biosynthesis; CoA from (R)-pantothenate: step 3/5. In terms of biological role, catalyzes the decarboxylation of the cysteine moiety of 4-phosphopantothenoylcysteine to form 4'-phosphopantotheine and this reaction forms part of the biosynthesis of coenzyme A. This is Phosphopantothenoylcysteine decarboxylase (Ppcdc) from Mus musculus (Mouse).